We begin with the raw amino-acid sequence, 283 residues long: Diaminopimelate epimerase (283 aa).

Residues asparagine 13 and asparagine 65 each coordinate substrate. Residue cysteine 74 is the Proton donor of the active site. Substrate is bound by residues 75 to 76, asparagine 196, and 214 to 215; these read GN and ER. Residue cysteine 223 is the Proton acceptor of the active site. Residue 224–225 participates in substrate binding; sequence GT.

The protein belongs to the diaminopimelate epimerase family. In terms of assembly, homodimer.

It localises to the cytoplasm. The catalysed reaction is (2S,6S)-2,6-diaminopimelate = meso-2,6-diaminopimelate. It participates in amino-acid biosynthesis; L-lysine biosynthesis via DAP pathway; DL-2,6-diaminopimelate from LL-2,6-diaminopimelate: step 1/1. Catalyzes the stereoinversion of LL-2,6-diaminopimelate (L,L-DAP) to meso-diaminopimelate (meso-DAP), a precursor of L-lysine and an essential component of the bacterial peptidoglycan. The sequence is that of Diaminopimelate epimerase from Alkaliphilus metalliredigens (strain QYMF).